Reading from the N-terminus, the 330-residue chain is Cyclic AMP receptor-like protein E (330 aa).

Over 1–10 (MLSLSSYVLN) the chain is Extracellular. Residues 11–31 (LVGSILCLIGCLFIIGHFFWI) form a helical membrane-spanning segment. Topologically, residues 32-40 (PLLRTSLSR) are cytoplasmic. The helical transmembrane segment at 41–61 (IIIYPTFILLLYDMVSFPSFI) threads the bilayer. Residues 62 to 85 (SKTADLYIERSTIICNFQEAIIQY) are Extracellular-facing. Residues 86–106 (LILSNFIWSVCISVNLLYLCF) traverse the membrane as a helical segment. At 107 to 116 (SPNKNLKKNE) the chain is on the cytoplasmic side. A helical membrane pass occupies residues 117–137 (LLYHLCSWGIPLIVVVITKIP). At 138–156 (NMISDNGNQCRFKSPNYIK) the chain is on the extracellular side. Residues 157 to 177 (FYLETILFIAFMLFNFIVAFI) traverse the membrane as a helical segment. At 178–213 (TIKHIISGNLRESETTTTSVLFVNEKKITTKKIVWR) the chain is on the cytoplasmic side. Residues 214 to 234 (LLLYPSILSICYIMTLVLSIY) traverse the membrane as a helical segment. At 235 to 274 (QFSTESYGSGGAYANSINNKRNDKNTESGNSNNNNNSYIE) the chain is on the extracellular side. An N-linked (GlcNAc...) asparagine glycan is attached at N269. A helical membrane pass occupies residues 275–295 (ILLYISKAIFLLQGFFNALVY). Residues 296 to 330 (LRSSKLRDRYKKITIFRKIFWRDEADYQSINDGFN) lie on the Cytoplasmic side of the membrane.

The protein belongs to the G-protein coupled receptor 5 family.

It localises to the membrane. Its function is as follows. Receptor for cAMP. This is Cyclic AMP receptor-like protein E (crlE) from Dictyostelium discoideum (Social amoeba).